The chain runs to 933 residues: Progesterone receptor (933 aa).

The tract at residues 1–164 (MTELKAKGPR…PATQGVLSPL (164 aa)) is AF3; mediates transcriptional activation. The segment at 1-256 (MTELKAKGPR…AAAGGGAAAV (256 aa)) is disordered. The interval 1 to 566 (MTELKAKGPR…YSFESLPQKI (566 aa)) is modulating, Pro-Rich. Residue serine 20 is modified to Phosphoserine. The short motif at 55–59 (LDGLL) is the LXXL motif 1 element. Serine 81 is modified (phosphoserine). Positions 115-119 (LETLL) match the LXXL motif 2 motif. Phosphoserine is present on residues serine 130 and serine 162. The interval 165–305 (MSRSGGKAGD…LATTVMDFIH (141 aa)) is mediates transcriptional transrepression. The Nuclear localization signal signature appears at 183–187 (KVLPR). Phosphoserine is present on residues serine 190 and serine 213. A compositionally biased stretch (acidic residues) spans 220-231 (EVEEEDGSESEE). Residues 232-246 (SAGPLLKGKPRALGG) show a composition bias toward low complexity. Serine 294 carries the phosphoserine; by MAPK1 modification. The tract at residues 331-378 (GGAGAASAFAPPRSSPSASSTPVAVGDFPDCAYPPDAEPKDDAYPLYS) is disordered. Residues 335-350 (AASAFAPPRSSPSASS) are compositionally biased toward low complexity. Position 345 is a phosphoserine; by MAPK (serine 345). Residue lysine 388 forms a Glycyl lysine isopeptide (Lys-Gly) (interchain with G-Cter in SUMO); alternate linkage. A Glycyl lysine isopeptide (Lys-Gly) (interchain with G-Cter in ubiquitin); alternate cross-link involves residue lysine 388. Serine 400 is modified (phosphoserine; by CDK2). The disordered stretch occupies residues 415–452 (PDFPLGPPPPLPPRAPPSRPGEAAVTAAPASASVSSAS). A compositionally biased stretch (pro residues) spans 418 to 433 (PLGPPPPLPPRAPPSR). Low complexity predominate over residues 434–452 (PGEAAVTAAPASASVSSAS). An AF1; mediates transcriptional activation region spans residues 456-546 (STLECILYKA…VYPPYLNYLR (91 aa)). A Glycyl lysine isopeptide (Lys-Gly) (interchain with G-Cter in SUMO) cross-link involves residue lysine 531. 2 consecutive NR C4-type zinc fingers follow at residues 567–587 (CLIC…CGSC) and 603–627 (CAGR…LRKC). Residues 567-639 (CLICGDEASG…AGMVLGGRKF (73 aa)) constitute a DNA-binding region (nuclear receptor). Position 676 is a phosphoserine (serine 676). The region spanning 679–913 (QDIQLIPPLI…EFPEMMSEVI (235 aa)) is the NR LBD domain. The AF2; mediates transcriptional activation stretch occupies residues 687–933 (LINLLMSIEP…MVKPLLFHKK (247 aa)). Residue arginine 766 coordinates progesterone.

This sequence belongs to the nuclear hormone receptor family. As to quaternary structure, interacts with SMARD1 and UNC45A. Interacts with CUEDC2; the interaction promotes ubiquitination, decreases sumoylation, and represses transcriptional activity. Interacts with PIAS3; the interaction promotes sumoylation of PR in a hormone-dependent manner, inhibits DNA-binding, and alters nuclear export. Interacts with SP1; the interaction requires ligand-induced phosphorylation on Ser-345 by ERK1/2-MAPK. Interacts with PRMT2. Interacts with NCOA2 and NCOA1. Interacts with KLF9. Interacts with GTF2B. Post-translationally, phosphorylated on multiple serine sites. Several of these sites are hormone-dependent. Phosphorylation on Ser-294 is highly hormone-dependent and modulates ubiquitination and sumoylation on Lys-388. Phosphorylation on Ser-102 and Ser-345 also requires induction by hormone. Basal phosphorylation on Ser-81, Ser-162, Ser-190 and Ser-400 is increased in response to progesterone and can be phosphorylated in vitro by the CDK2-A1 complex. Increased levels of phosphorylation on Ser-400 also in the presence of EGF, heregulin, IGF, PMA and FBS. Phosphorylation at this site by CDK2 is ligand-independent, and increases nuclear translocation and transcriptional activity. Phosphorylation at Ser-162 and Ser-294, but not at Ser-190, is impaired during the G(2)/M phase of the cell cycle. Phosphorylation on Ser-345 by ERK1/2 MAPK is required for interaction with SP1. In terms of processing, sumoylation is hormone-dependent and represses transcriptional activity. Sumoylation on all three sites is enhanced by PIAS3. Desumoylated by SENP1. Sumoylation on Lys-388, the main site of sumoylation, is repressed by ubiquitination on the same site, and modulated by phosphorylation at Ser-294. Ubiquitination is hormone-dependent and represses sumoylation on the same site. Promoted by MAPK-mediated phosphorylation on Ser-294. Ubiquitinated by UBR5, leading to its degradation: UBR5 specifically recognizes and binds ligand-bound PGR when it is not associated with coactivators (NCOAs). In presence of NCOAs, the UBR5-degron is not accessible, preventing its ubiquitination and degradation. Post-translationally, palmitoylated by ZDHHC7 and ZDHHC21. Palmitoylation is required for plasma membrane targeting and for rapid intracellular signaling via ERK and AKT kinases and cAMP generation.

The protein localises to the nucleus. It localises to the cytoplasm. Its function is as follows. The steroid hormones and their receptors are involved in the regulation of eukaryotic gene expression and affect cellular proliferation and differentiation in target tissues. Transcriptional activator of several progesteron-dependent promoters in a variety of cell types. Involved in activation of SRC-dependent MAPK signaling on hormone stimulation. This Gorilla gorilla gorilla (Western lowland gorilla) protein is Progesterone receptor (PGR).